Reading from the N-terminus, the 567-residue chain is MGYDEAIIHLGDFGRYQKIIYFLICLTSIPVAFHKLAGVFLLAKPDFRCALPFENGSSYDLPTHLWNLSYPENERCSYYDVDYTEEYLNGSIPRSSNETKTCSSYVYDRSKYLNSAVTEWNLVCGRDFMAATSDSLFMLGVLLGSIVFGQLSDKYGRKPILFASLVIQVLFGVLAGVAPEYFTYTFARLMVGATTSGVFLVAYVVAMEMVGPDKRLYAGIFVMMFFSVGFMLTAVFAYFVHDWRWLQIALTLPGLIFMFYYWIIPESARWLLLKGRKDCAIANMQKAARFNKVEISDEALSELLDEGENSEEKAKQKLEDQELDEGPPPSVWDLFCYPNLRRKTLLIFLDWLVTSGVYYGLSWNTSNLGGNVLLNFVISGAVEIPAYIFLLLTLNRWGRRSILCGCLVMAGLSLLATVIIPQRMHTLIVACAMLGKLAITASYGTVYIFSAEQFPTVVRNVALGAASMVARISGMMAPFLNFLATIWKPLPLLICGSLTLVAGLLSLLLPETHNKPMLETIADGERFGKKTKADVYLETGQELRAPEAQPLKGSGETNGSTIANGHK.

Over 1-21 (MGYDEAIIHLGDFGRYQKIIY) the chain is Cytoplasmic. The chain crosses the membrane as a helical span at residues 22–42 (FLICLTSIPVAFHKLAGVFLL). At 43–127 (AKPDFRCALP…TEWNLVCGRD (85 aa)) the chain is on the extracellular side. Residues N55, N67, N89, and N97 are each glycosylated (N-linked (GlcNAc...) asparagine). A helical membrane pass occupies residues 128 to 148 (FMAATSDSLFMLGVLLGSIVF). Topologically, residues 149–158 (GQLSDKYGRK) are cytoplasmic. A helical membrane pass occupies residues 159 to 179 (PILFASLVIQVLFGVLAGVAP). At 180 to 189 (EYFTYTFARL) the chain is on the extracellular side. The chain crosses the membrane as a helical span at residues 190–210 (MVGATTSGVFLVAYVVAMEMV). Over 211–219 (GPDKRLYAG) the chain is Cytoplasmic. Residues 220 to 240 (IFVMMFFSVGFMLTAVFAYFV) form a helical membrane-spanning segment. Residues 241-244 (HDWR) are Extracellular-facing. Residues 245–265 (WLQIALTLPGLIFMFYYWIIP) traverse the membrane as a helical segment. The Cytoplasmic segment spans residues 266–343 (ESARWLLLKG…LFCYPNLRRK (78 aa)). The disordered stretch occupies residues 304-326 (LDEGENSEEKAKQKLEDQELDEG). Residues 310–320 (SEEKAKQKLED) are compositionally biased toward basic and acidic residues. The chain crosses the membrane as a helical span at residues 344 to 364 (TLLIFLDWLVTSGVYYGLSWN). Residues 365–371 (TSNLGGN) are Extracellular-facing. A helical transmembrane segment spans residues 372–392 (VLLNFVISGAVEIPAYIFLLL). The Cytoplasmic segment spans residues 393–400 (TLNRWGRR). Residues 401–421 (SILCGCLVMAGLSLLATVIIP) form a helical membrane-spanning segment. The Extracellular portion of the chain corresponds to 422-427 (QRMHTL). Residues 428-448 (IVACAMLGKLAITASYGTVYI) traverse the membrane as a helical segment. The Cytoplasmic segment spans residues 449 to 462 (FSAEQFPTVVRNVA). A helical transmembrane segment spans residues 463-483 (LGAASMVARISGMMAPFLNFL). Residues 484 to 489 (ATIWKP) are Extracellular-facing. A helical membrane pass occupies residues 490–510 (LPLLICGSLTLVAGLLSLLLP). The Cytoplasmic portion of the chain corresponds to 511-567 (ETHNKPMLETIADGERFGKKTKADVYLETGQELRAPEAQPLKGSGETNGSTIANGHK). The interval 546-567 (PEAQPLKGSGETNGSTIANGHK) is disordered. Positions 555–567 (GETNGSTIANGHK) are enriched in polar residues.

This sequence belongs to the major facilitator (TC 2.A.1) superfamily. Organic cation transporter (TC 2.A.1.19) family.

The protein localises to the membrane. Probably transports organic cations. The polypeptide is Organic cation transporter-like protein (Orct2) (Drosophila melanogaster (Fruit fly)).